The following is a 396-amino-acid chain: Probable sugar efflux transporter (396 aa).

Residues 1–14 (MTTNTVSRKVAWLR) lie on the Cytoplasmic side of the membrane. The helical transmembrane segment at 15–35 (VVTLAVAAFIFNTTEFVPVGL) threads the bilayer. The Periplasmic portion of the chain corresponds to 36–49 (LSDIAQSFHMQTAQ). The chain crosses the membrane as a helical span at residues 50–70 (VGIMLTIYAWVVALMSLPFML). The Cytoplasmic segment spans residues 71 to 80 (MTSQVERRKL). A helical membrane pass occupies residues 81–101 (LICLFVVFIASHVLSFLSWSF). Threonine 102 is a topological domain (periplasmic). Residues 103-123 (VLVISRIGVAFAHAIFWSITA) form a helical membrane-spanning segment. At 124-135 (SLAIRMAPAGKR) the chain is on the cytoplasmic side. The helical transmembrane segment at 136-156 (AQALSLIATGTALAMVLGLPL) threads the bilayer. The Periplasmic segment spans residues 157-169 (GRIVGQYFGWRMT). A helical membrane pass occupies residues 170-190 (FFAIGIGALVTLLCLIKLLPL). Residues 191–208 (LPSEHSGSLKSLPLLFRR) are Cytoplasmic-facing. Residues 209–229 (PALMSIYLLTVVVVTAHYTAY) form a helical membrane-spanning segment. Residues 230-245 (SYIEPFVQNIAGFSAN) lie on the Periplasmic side of the membrane. A helical transmembrane segment spans residues 246–266 (FATALLLLLGGAGIIGSVIFG). Residues 267–274 (KLGNQYAS) lie on the Cytoplasmic side of the membrane. A helical transmembrane segment spans residues 275-295 (ALVSTAIALLLVCLALLLPAA). Over 296–298 (NSE) the chain is Periplasmic. The chain crosses the membrane as a helical span at residues 299-319 (IHLGVLSIFWGIAMMIIGLGM). The Cytoplasmic segment spans residues 320-332 (QVKVLALAPDATD). A helical transmembrane segment spans residues 333–353 (VAMALFSGIFNIGIGAGALVG). Topologically, residues 354–363 (NQVSLHWSMS) are periplasmic. A helical transmembrane segment spans residues 364–384 (MIGYVGAVPAFAALIWSIIIF). At 385 to 396 (RRWPVTLEEQTQ) the chain is on the cytoplasmic side.

It belongs to the major facilitator superfamily. SotB (TC 2.A.1.2) family.

Its subcellular location is the cell inner membrane. Involved in the efflux of sugars. The physiological role may be the reduction of the intracellular concentration of toxic sugars or sugar metabolites. This is Probable sugar efflux transporter from Shigella flexneri.